We begin with the raw amino-acid sequence, 99 residues long: UPF0751 protein BAMEG_A0107 (99 aa).

The protein belongs to the UPF0751 family.

This Bacillus anthracis (strain CDC 684 / NRRL 3495) protein is UPF0751 protein BAMEG_A0107.